A 313-amino-acid polypeptide reads, in one-letter code: Expansin-like A4 (313 aa).

The signal sequence occupies residues 1 to 30 (MDDNGDVHFCHRATAVVALLLLHLVVVANA). The Expansin-like EG45 domain maps to 59 to 173 (GGACGFGAAP…RRIPCEYRES (115 aa)). Asn124 carries N-linked (GlcNAc...) asparagine glycosylation. In terms of domain architecture, Expansin-like CBD spans 188–281 (THLAIRFLYQ…DWRPGEVYDT (94 aa)).

The protein belongs to the expansin family. Expansin-like A subfamily.

The protein localises to the secreted. This is Expansin-like A4 (EXLA4) from Oryza sativa subsp. japonica (Rice).